A 91-amino-acid chain; its full sequence is Small ribosomal subunit protein bS18 (91 aa).

It belongs to the bacterial ribosomal protein bS18 family. As to quaternary structure, part of the 30S ribosomal subunit. Forms a tight heterodimer with protein bS6.

Functionally, binds as a heterodimer with protein bS6 to the central domain of the 16S rRNA, where it helps stabilize the platform of the 30S subunit. The sequence is that of Small ribosomal subunit protein bS18 from Paraburkholderia phytofirmans (strain DSM 17436 / LMG 22146 / PsJN) (Burkholderia phytofirmans).